Reading from the N-terminus, the 216-residue chain is GTP cyclohydrolase 1 (216 aa).

Cysteine 108, histidine 111, and cysteine 179 together coordinate Zn(2+).

The protein belongs to the GTP cyclohydrolase I family. Toroid-shaped homodecamer, composed of two pentamers of five dimers.

It carries out the reaction GTP + H2O = 7,8-dihydroneopterin 3'-triphosphate + formate + H(+). It functions in the pathway cofactor biosynthesis; 7,8-dihydroneopterin triphosphate biosynthesis; 7,8-dihydroneopterin triphosphate from GTP: step 1/1. The sequence is that of GTP cyclohydrolase 1 from Shewanella amazonensis (strain ATCC BAA-1098 / SB2B).